The sequence spans 240 residues: tRNA (guanine-N(1)-)-methyltransferase (240 aa).

S-adenosyl-L-methionine contacts are provided by residues Gly-108 and 127-132; that span reads LGDFIL.

It belongs to the RNA methyltransferase TrmD family. Homodimer.

The protein localises to the cytoplasm. The enzyme catalyses guanosine(37) in tRNA + S-adenosyl-L-methionine = N(1)-methylguanosine(37) in tRNA + S-adenosyl-L-homocysteine + H(+). In terms of biological role, specifically methylates guanosine-37 in various tRNAs. The protein is tRNA (guanine-N(1)-)-methyltransferase of Streptococcus mutans serotype c (strain ATCC 700610 / UA159).